The sequence spans 567 residues: Zinc finger protein 512 (567 aa).

The tract at residues 1-32 (MSSRLGAVPATSGPTTFKQQRSTRIVGAKNSR) is disordered. Polar residues predominate over residues 12–23 (SGPTTFKQQRST). Glycyl lysine isopeptide (Lys-Gly) (interchain with G-Cter in SUMO2) cross-links involve residues Lys18 and Lys84. The tract at residues 86 to 148 (AATSHVEGSG…QARRIRKEPP (63 aa)) is disordered. Positions 119–130 (KKHKLYGRKQRP) are enriched in basic residues. The segment at 197–220 (FTCHHCGKQLRSLAGMKYHVMANH) adopts a C2H2-type 1 zinc-finger fold. Lys227 is covalently cross-linked (Glycyl lysine isopeptide (Lys-Gly) (interchain with G-Cter in SUMO2)). The segment at 287–310 (LKCHHCGKPYRSKAGLAYHLRSEH) adopts a C2H2-type 2 zinc-finger fold. Lys333 is covalently cross-linked (Glycyl lysine isopeptide (Lys-Gly) (interchain with G-Cter in SUMO2)). A C2H2-type 3; atypical zinc finger spans residues 406–430 (IQCPNQGCEAVYSSVSGLKAHLGSC). The segment at 440-463 (YKCLLCQKEFVSESGVKYHINSVH) adopts a C2H2-type 4 zinc-finger fold. The interval 486-567 (QRQQEEEKRR…PKTNHKRGRK (82 aa)) is disordered. The segment covering 495–508 (RQQHRSRRSLRRRQ) has biased composition (basic residues). Positions 523–532 (VGKDQRRNNE) are enriched in basic and acidic residues. Positions 556–567 (KPPKTNHKRGRK) are enriched in basic residues.

The protein belongs to the krueppel C2H2-type zinc-finger protein family.

Its subcellular location is the nucleus. In terms of biological role, may be involved in transcriptional regulation. The sequence is that of Zinc finger protein 512 (ZNF512) from Homo sapiens (Human).